We begin with the raw amino-acid sequence, 329 residues long: Flotillin-like protein FloA (329 aa).

Transmembrane regions (helical) follow at residues 6 to 26 (FIVI…FVPI) and 27 to 47 (GLWI…LVGM).

Belongs to the flotillin-like FloA family. As to quaternary structure, homooligomerizes.

The protein localises to the cell membrane. Its subcellular location is the membrane raft. In terms of biological role, found in functional membrane microdomains (FMM) that may be equivalent to eukaryotic membrane rafts. FMMs are highly dynamic and increase in number as cells age. Flotillins are thought to be important factors in membrane fluidity. This is Flotillin-like protein FloA from Staphylococcus aureus (strain USA300).